A 258-amino-acid polypeptide reads, in one-letter code: Granzyme A (258 aa).

Residues 1–26 (MNIPFPFSFPPAICLLLIPGVFPVSC) form the signal peptide. A propeptide spans 27 to 28 (EG) (activation peptide). Residues 29–255 (IIGGNEVAPH…HLNWIKKTIA (227 aa)) form the Peptidase S1 domain. The cysteines at positions 52 and 68 are disulfide-linked. Active-site charge relay system residues include H67 and D112. 3 cysteine pairs are disulfide-bonded: C146–C217, C178–C196, and C207–C230. N169 carries N-linked (GlcNAc...) asparagine glycosylation. Residue S211 is the Charge relay system of the active site.

It belongs to the peptidase S1 family. Granzyme subfamily. In terms of assembly, homodimer; disulfide-linked. Interacts with APEX1.

The protein resides in the secreted. It is found in the cytoplasmic granule. It carries out the reaction Hydrolysis of proteins, including fibronectin, type IV collagen and nucleolin. Preferential cleavage: -Arg-|-Xaa-, -Lys-|-Xaa- &gt;&gt; -Phe-|-Xaa- in small molecule substrates.. Functionally, abundant protease in the cytosolic granules of cytotoxic T-cells and NK-cells which activates caspase-independent pyroptosis when delivered into the target cell through the immunological synapse. It cleaves after Lys or Arg. Cleaves APEX1 after 'Lys-31' and destroys its oxidative repair activity. Cleaves the nucleosome assembly protein SET after 'Lys-189', which disrupts its nucleosome assembly activity and allows the SET complex to translocate into the nucleus to nick and degrade the DNA. This is Granzyme A (GZMA) from Bos taurus (Bovine).